The following is a 425-amino-acid chain: Orexin/Hypocretin receptor type 1 (425 aa).

Residues 1-46 (MEPSATPGPQMGVPTGVGDPSLVPPDYEEEFLSYLWRDYLYPKQYE) are Extracellular-facing. Residues 26–41 (DYEEEFLSYLWRDYLY) are required for response to orexin-A. The chain crosses the membrane as a helical span at residues 47–67 (WVLIAAYVAVFLVALVGNTLV). Residues 68-82 (CLAVWRNHHMRTVTN) lie on the Cytoplasmic side of the membrane. A helical membrane pass occupies residues 83–105 (YFIVNLSLADVLVTAICLPASLL). The Extracellular portion of the chain corresponds to 106-119 (VDITESWLFGHALC). An intrachain disulfide couples C119 to C202. Residues 120–140 (KVIPYLQAVSVSVAVLTLSFI) form a helical membrane-spanning segment. The Cytoplasmic portion of the chain corresponds to 141 to 160 (ALDRWYAIYHPLLFKSTARR). A helical transmembrane segment spans residues 161–182 (ARGSILGIWAVSPAVMVPQAAV). At 183–213 (MECSSVLPELANRTRLFSVCDERWADDLYPK) the chain is on the extracellular side. Residues 214–235 (IYHSCFFIVTYLAPLGLMAMAY) form a helical membrane-spanning segment. The Cytoplasmic portion of the chain corresponds to 236-298 (FQIFRKLWGR…QMRARRKTAK (63 aa)). A helical membrane pass occupies residues 299-321 (MLMVVLLVFALCYLPISVLNVLK). Over 322-336 (RVFGMFRQTSDREAV) the chain is Extracellular. Residues 337–360 (YACFTFSHWLVYANSAANPIIYNF) traverse the membrane as a helical segment. At 361-425 (LSGKFREQFK…VLTSVTTVLP (65 aa)) the chain is on the cytoplasmic side.

It belongs to the G-protein coupled receptor 1 family.

It localises to the cell membrane. Its function is as follows. Moderately selective excitatory receptor for orexin-A and, with a lower affinity, for orexin-B neuropeptide. Triggers an increase in cytoplasmic Ca(2+) levels in response to orexin-A binding. The sequence is that of Orexin/Hypocretin receptor type 1 from Sus scrofa (Pig).